Consider the following 516-residue polypeptide: Propionyl-CoA carboxylase, carboxyltransferase subunit (516 aa).

Positions 1-32 (MTMEDRIDELREKREEALKGGGEDRIASQHDK) are disordered. The CoA carboxyltransferase N-terminal domain occupies 3-259 (MEDRIDELRE…NNVEDPPRVE (257 aa)). One can recognise a CoA carboxyltransferase C-terminal domain in the interval 263 to 509 (DPERVADELE…KSKRKSQPDK (247 aa)).

Belongs to the AccD/PCCB family. As to quaternary structure, the propionyl coenzyme A carboxylase (PCC) complex is composed of three subunits: PccA (biotin carboxylase and biotin-carboxyl carrier), PccB (carboxyltransferase) and PccX.

The catalysed reaction is propanoyl-CoA + hydrogencarbonate + ATP = (S)-methylmalonyl-CoA + ADP + phosphate + H(+). It participates in metabolic intermediate metabolism; propanoyl-CoA degradation; succinyl-CoA from propanoyl-CoA: step 1/3. Part of the propionyl coenzyme A carboxylase (PCC) complex involved in propionate utilization and in the production of the poly(3-hydroxybutyrate-co-3-hydroxyvalerate)(PHBV), which is a water-insoluble biopolymer used as intracellular energy reserve material when cells grow under conditions of nutrient limitation. The complex catalyzes the carboxylation of propionyl-CoA to methylmalonyl-CoA. PCC is also able to catalyze the carboxylation of acetyl-CoA. In Haloferax mediterranei (strain ATCC 33500 / DSM 1411 / JCM 8866 / NBRC 14739 / NCIMB 2177 / R-4) (Halobacterium mediterranei), this protein is Propionyl-CoA carboxylase, carboxyltransferase subunit.